We begin with the raw amino-acid sequence, 140 residues long: 3-hydroxyacyl-[acyl-carrier-protein] dehydratase FabZ (140 aa).

Histidine 48 is an active-site residue.

This sequence belongs to the thioester dehydratase family. FabZ subfamily.

It is found in the cytoplasm. It carries out the reaction a (3R)-hydroxyacyl-[ACP] = a (2E)-enoyl-[ACP] + H2O. Functionally, involved in unsaturated fatty acids biosynthesis. Catalyzes the dehydration of short chain beta-hydroxyacyl-ACPs and long chain saturated and unsaturated beta-hydroxyacyl-ACPs. This is 3-hydroxyacyl-[acyl-carrier-protein] dehydratase FabZ from Caldicellulosiruptor saccharolyticus (strain ATCC 43494 / DSM 8903 / Tp8T 6331).